Consider the following 442-residue polypeptide: 3-dehydroquinate synthase, chloroplastic (442 aa).

The transit peptide at 1-61 (MASSFCPKQA…TTRLKVLATS (61 aa)) directs the protein to the chloroplast. Residues asparagine 119, 150-152 (DGE), lysine 155, 183-188 (GGVIGD), 208-209 (TT), lysine 221, lysine 230, and 248-251 (TLNT) each bind NAD(+). Glutamate 263 serves as a coordination point for a divalent metal cation. Position 305 (lysine 305) interacts with NAD(+). Positions 326 and 343 each coordinate a divalent metal cation.

Belongs to the sugar phosphate cyclases superfamily. Dehydroquinate synthase family. As to quaternary structure, homodimer. The cofactor is a divalent metal cation. It depends on NAD(+) as a cofactor. Highly expressed in roots. Lower expression in stems, flowers and cotyledons. Barely detected in leaves.

It localises to the plastid. The protein resides in the chloroplast. It carries out the reaction 7-phospho-2-dehydro-3-deoxy-D-arabino-heptonate = 3-dehydroquinate + phosphate. It functions in the pathway metabolic intermediate biosynthesis; chorismate biosynthesis; chorismate from D-erythrose 4-phosphate and phosphoenolpyruvate: step 2/7. Functionally, catalyzes the second step in the shikimate pathway. In Solanum lycopersicum (Tomato), this protein is 3-dehydroquinate synthase, chloroplastic (DHQS).